The chain runs to 148 residues: Lysozyme C (148 aa).

Positions 1 to 18 (MKAVIILGLVLLSVTVQG) are cleaved as a signal peptide. The C-type lysozyme domain maps to 19 to 148 (KIFERCELAR…VSQYVQGCGV (130 aa)). 4 disulfide bridges follow: C24–C146, C48–C134, C83–C99, and C95–C113. Catalysis depends on residues E53 and D71.

Belongs to the glycosyl hydrolase 22 family. Monomer.

The protein resides in the secreted. It catalyses the reaction Hydrolysis of (1-&gt;4)-beta-linkages between N-acetylmuramic acid and N-acetyl-D-glucosamine residues in a peptidoglycan and between N-acetyl-D-glucosamine residues in chitodextrins.. Lysozymes have primarily a bacteriolytic function; those in tissues and body fluids are associated with the monocyte-macrophage system and enhance the activity of immunoagents. The chain is Lysozyme C (LYZ) from Papio anubis (Olive baboon).